Here is a 23-residue protein sequence, read N- to C-terminus: Cytochrome c oxidase subunit 7A1, mitochondrial (23 aa).

It belongs to the cytochrome c oxidase VIIa family. Component of the complex IV (CIV, cytochrome c oxidase), a multisubunit enzyme composed of 14 subunits. The complex is composed of a catalytic core of 3 subunits MT-CO1, MT-CO2 and MT-CO3, encoded in the mitochondrial DNA, and 11 supernumerary subunits COX4I1 (or COX4I2), COX5A, COX5B, COX6A2 (or COX6A1), COX6B1 (or COX6B2), COX6C, COX7A1 (or COX7A2), COX7B, COX7C, COX8B and NDUFA4, which are encoded in the nuclear genome. The complex exists as a monomer or a dimer and forms supercomplexes (SCs) in the inner mitochondrial membrane with NADH-ubiquinone oxidoreductase (complex I, CI) and ubiquinol-cytochrome c oxidoreductase (cytochrome b-c1 complex, complex III, CIII), resulting in different assemblies (supercomplex SCI(1)III(2)IV(1) and megacomplex MCI(2)III(2)IV(2)).

Its subcellular location is the mitochondrion inner membrane. It functions in the pathway energy metabolism; oxidative phosphorylation. In terms of biological role, component of the mitochondrial respiratory complex IV (CIV, also named cytochrome c oxidase complex), the last enzyme in the mitochondrial electron transport chain which drives oxidative phosphorylation. The CIV complex is the component of the respiratory chain that catalyzes the reduction of oxygen to water. Acts as an assembly factor that specifically drives the homodimerization of CIV complexes, mediating the formation of mitochondrial respiratory supercomplexes (respirasomes) containing two CIV: supercomplxes with two molecules of CIV show improved activity. Despite being highly expressed in brown adipose tissue, not required for thermogenesis. The polypeptide is Cytochrome c oxidase subunit 7A1, mitochondrial (COX7A1) (Canis lupus familiaris (Dog)).